Here is a 932-residue protein sequence, read N- to C-terminus: Probable serine/threonine-protein kinase clkA (932 aa).

The span at 1 to 10 (MDRFQTKRKT) shows a compositional bias: basic residues. Disordered regions lie at residues 1 to 21 (MDRF…NNDY), 39 to 198 (YKNN…YGDT), and 212 to 562 (NDYD…TNTN). 2 stretches are compositionally biased toward low complexity: residues 11–21 (YSYNGYSNNDY) and 39–123 (YKNN…ENNY). Polar residues predominate over residues 124–143 (FQSENQSNKDQNSYFNSSYL). Composition is skewed to low complexity over residues 148 to 196 (DNYN…NSYG), 218 to 305 (NNNN…NGGN), 314 to 342 (VFNN…NNDY), and 351 to 562 (NIYS…TNTN). The Protein kinase domain maps to 590-920 (YKVLCTVGSG…ASDALSHPFL (331 aa)). ATP-binding positions include 596-604 (VGSGTFSTV) and lysine 619. Catalysis depends on aspartate 719, which acts as the Proton acceptor.

This sequence belongs to the protein kinase superfamily. CMGC Ser/Thr protein kinase family.

It carries out the reaction L-seryl-[protein] + ATP = O-phospho-L-seryl-[protein] + ADP + H(+). The catalysed reaction is L-threonyl-[protein] + ATP = O-phospho-L-threonyl-[protein] + ADP + H(+). The chain is Probable serine/threonine-protein kinase clkA (clkA) from Dictyostelium discoideum (Social amoeba).